The sequence spans 336 residues: Holliday junction branch migration complex subunit RuvB (336 aa).

A large ATPase domain (RuvB-L) region spans residues methionine 1–tyrosine 184. ATP contacts are provided by residues leucine 23, arginine 24, glycine 65, lysine 68, threonine 69, threonine 70, glutamate 131–tyrosine 133, arginine 174, tyrosine 184, and arginine 221. Threonine 69 contributes to the Mg(2+) binding site. The small ATPAse domain (RuvB-S) stretch occupies residues asparagine 185–arginine 255. The tract at residues lysine 258–glycine 336 is head domain (RuvB-H). Positions 313 and 318 each coordinate DNA.

Belongs to the RuvB family. Homohexamer. Forms an RuvA(8)-RuvB(12)-Holliday junction (HJ) complex. HJ DNA is sandwiched between 2 RuvA tetramers; dsDNA enters through RuvA and exits via RuvB. An RuvB hexamer assembles on each DNA strand where it exits the tetramer. Each RuvB hexamer is contacted by two RuvA subunits (via domain III) on 2 adjacent RuvB subunits; this complex drives branch migration. In the full resolvosome a probable DNA-RuvA(4)-RuvB(12)-RuvC(2) complex forms which resolves the HJ.

It localises to the cytoplasm. It carries out the reaction ATP + H2O = ADP + phosphate + H(+). In terms of biological role, the RuvA-RuvB-RuvC complex processes Holliday junction (HJ) DNA during genetic recombination and DNA repair, while the RuvA-RuvB complex plays an important role in the rescue of blocked DNA replication forks via replication fork reversal (RFR). RuvA specifically binds to HJ cruciform DNA, conferring on it an open structure. The RuvB hexamer acts as an ATP-dependent pump, pulling dsDNA into and through the RuvAB complex. RuvB forms 2 homohexamers on either side of HJ DNA bound by 1 or 2 RuvA tetramers; 4 subunits per hexamer contact DNA at a time. Coordinated motions by a converter formed by DNA-disengaged RuvB subunits stimulates ATP hydrolysis and nucleotide exchange. Immobilization of the converter enables RuvB to convert the ATP-contained energy into a lever motion, pulling 2 nucleotides of DNA out of the RuvA tetramer per ATP hydrolyzed, thus driving DNA branch migration. The RuvB motors rotate together with the DNA substrate, which together with the progressing nucleotide cycle form the mechanistic basis for DNA recombination by continuous HJ branch migration. Branch migration allows RuvC to scan DNA until it finds its consensus sequence, where it cleaves and resolves cruciform DNA. This chain is Holliday junction branch migration complex subunit RuvB, found in Ligilactobacillus salivarius (strain UCC118) (Lactobacillus salivarius).